Here is a 682-residue protein sequence, read N- to C-terminus: Cyclic nucleotide-gated cation channel (682 aa).

Residues 1–41 (MTGQAALERSVSSHRLSVRSRLEGEAERAESAISRTDGDDD) form a disordered region. Topologically, residues 1–136 (MTGQAALERS…EGFVVSQSDD (136 aa)) are cytoplasmic. A compositionally biased stretch (basic and acidic residues) spans 20–30 (SRLEGEAERAE). The helical transmembrane segment at 137 to 157 (IYYYWLFFIALASLYNWIMLV) threads the bilayer. The Extracellular portion of the chain corresponds to 158-169 (ARACFDQLQDEN). Residues 170 to 190 (FFLWVGLDYLCDVIYILDTCI) traverse the membrane as a helical segment. Residues 191-218 (RLRTGYLEQGLLVKDLAKLRDNYIRTLQ) are Cytoplasmic-facing. Residues 219–239 (FKLDFLSILPTELLFFVTGYV) form a helical membrane-spanning segment. At 240–272 (PQLRFNRLLRFSRMFEFFDRTETRTNYPNAFRI) the chain is on the extracellular side. Residues 273 to 293 (CNLILYILVIIHWNACIYYAI) traverse the membrane as a helical segment. Over 294 to 311 (SKALGLSSDTWVYSGQNK) the chain is Cytoplasmic. The helical transmembrane segment at 312 to 332 (TLSFCYVYCFYWSTLTLTTIG) threads the bilayer. Residues 333-343 (EMPPPVKDEEY) are Extracellular-facing. Residues 344–364 (VFVVFDFLVGVLIFATIVGNV) traverse the membrane as a helical segment. The Cytoplasmic segment spans residues 365 to 682 (GSMIANMNAT…SAETNSEEET (318 aa)). Residues 455–577 (LLVE…QGLL), E514, and R529 each bind 3',5'-cyclic AMP. The disordered stretch occupies residues 649–682 (GEHAGVPTHTHADIHAQPETHTRTSAETNSEEET). Residues 658–672 (THADIHAQPETHTRT) are compositionally biased toward basic and acidic residues.

Belongs to the cyclic nucleotide-gated cation channel (TC 1.A.1.5) family. As to expression, olfactory neurons.

The protein localises to the membrane. Functionally, this cyclic nucleotide-gated channel is activated equally well by both cAMP and cGMP. The chain is Cyclic nucleotide-gated cation channel from Ictalurus punctatus (Channel catfish).